A 387-amino-acid chain; its full sequence is Glutamate N-acetyltransferase (387 aa).

The substrate site is built by Thr140, Lys162, Thr173, Glu257, Asn382, and Thr387. Thr173 serves as the catalytic Nucleophile.

The protein belongs to the ArgJ family. In terms of assembly, heterotetramer of two alpha and two beta chains.

The protein resides in the cytoplasm. It carries out the reaction N(2)-acetyl-L-ornithine + L-glutamate = N-acetyl-L-glutamate + L-ornithine. It functions in the pathway amino-acid biosynthesis; L-arginine biosynthesis; L-ornithine and N-acetyl-L-glutamate from L-glutamate and N(2)-acetyl-L-ornithine (cyclic): step 1/1. Functionally, catalyzes the transfer of the acetyl group from N(2)-acetylornithine to glutamate, forming N-acetylglutamate and L-ornithine. This chain is Glutamate N-acetyltransferase, found in Methanopyrus kandleri (strain AV19 / DSM 6324 / JCM 9639 / NBRC 100938).